The primary structure comprises 203 residues: uncharacterized protein (203 aa).

Fe cation is bound by residues H34, E97, and H172.

The protein belongs to the hemerythrin family.

It is found in the mitochondrion. This is an uncharacterized protein from Schizosaccharomyces pombe (strain 972 / ATCC 24843) (Fission yeast).